The primary structure comprises 473 residues: Sphingosine kinase 1 (473 aa).

The region spanning 83–233 is the DAGKc domain; that stretch reads QCRGNLLVFI…VALYSVKTDN (151 aa). ATP contacts are provided by residues 93–95 and 125–129; these read NPN and TTGPN. Substrate is bound at residue 151–154; sequence SGDG. The Proton donor/acceptor role is filled by Asp-153. ATP contacts are provided by residues Glu-158 and 184–186; that span reads GSG. Asp-251 provides a ligand contact to substrate. ATP-binding positions include Arg-258, Arg-265, and 448–450; that span reads DGE.

It depends on Mg(2+) as a cofactor. In terms of tissue distribution, expressed in the majority of cholinergic and GABAergic neurons, body wall muscle, excretory canal cells, intestine, and hypodermis.

Its subcellular location is the presynaptic cell membrane. It localises to the cell projection. The protein resides in the axon. It is found in the perikaryon. The protein localises to the mitochondrion membrane. It catalyses the reaction a sphingoid base + ATP = a sphingoid 1-phosphate + ADP + H(+). It carries out the reaction 15-methylhexadecasphing-4-enine + ATP = 15-methylhexadecasphing-4-enine 1-phosphate + ADP + H(+). The catalysed reaction is 15-methylhexadecasphinganine + ATP = 15-methylhexadecasphinganine 1-phosphate + ADP + H(+). It functions in the pathway lipid metabolism; sphingolipid metabolism. Catalyzes the phosphorylation of sphingoid bases to form sphingoid 1-phosphate (SPP), which have both intra- and extracellular functions. C.elegans contain specific sphingoid bases, which are unique or different in structure compared to the sphingoid bases found in other animals. Two examples of these distinctive compounds are: 15-methylhexadecasphinganine and 15-methylhexadecasphing-4-enine. Required for neurotransmitter release from neuromuscular junctions. Acts by recruiting the synaptic vesicle priming protein unc-13 to synapses. This chain is Sphingosine kinase 1 (sphk-1), found in Caenorhabditis elegans.